Consider the following 374-residue polypeptide: ATPase ASNA1 homolog (374 aa).

ATP is bound at residue 44-51 (KGGVGKTT). The active site involves Asp-73. Residues Glu-244 and Asn-271 each contribute to the ATP site.

Belongs to the arsA ATPase family. Homodimer.

It localises to the cytoplasm. Its subcellular location is the endoplasmic reticulum. Its function is as follows. ATPase required for the post-translational delivery of tail-anchored (TA) proteins to the endoplasmic reticulum. Recognizes and selectively binds the transmembrane domain of TA proteins in the cytosol. This complex then targets to the endoplasmic reticulum by membrane-bound receptors, where the tail-anchored protein is released for insertion. This process is regulated by ATP binding and hydrolysis. ATP binding drives the homodimer towards the closed dimer state, facilitating recognition of newly synthesized TA membrane proteins. ATP hydrolysis is required for insertion. Subsequently, the homodimer reverts towards the open dimer state, lowering its affinity for the membrane-bound receptor, and returning it to the cytosol to initiate a new round of targeting. This Plasmodium vivax (strain Salvador I) protein is ATPase ASNA1 homolog.